We begin with the raw amino-acid sequence, 219 residues long: Peroxiredoxin (219 aa).

The Thioredoxin domain maps to 2–164; it reads PLIGDDAPSF…IKRIVVALQK (163 aa). C44 (cysteine sulfenic acid (-SOH) intermediate) is an active-site residue. R127 provides a ligand contact to substrate. Residues C206 and C212 are joined by a disulfide bond.

Belongs to the peroxiredoxin family. Prx6 subfamily. Homodecamer. Pentamer of dimers that assemble into a ring structure.

It localises to the cytoplasm. The catalysed reaction is a hydroperoxide + [thioredoxin]-dithiol = an alcohol + [thioredoxin]-disulfide + H2O. In terms of biological role, thiol-specific peroxidase that catalyzes the reduction of hydrogen peroxide and organic hydroperoxides to water and alcohols, respectively. Plays a role in cell protection against oxidative stress by detoxifying peroxides. The chain is Peroxiredoxin from Methanosarcina mazei (strain ATCC BAA-159 / DSM 3647 / Goe1 / Go1 / JCM 11833 / OCM 88) (Methanosarcina frisia).